A 208-amino-acid chain; its full sequence is V-type ATP synthase subunit D (208 aa).

This sequence belongs to the V-ATPase D subunit family.

Functionally, produces ATP from ADP in the presence of a proton gradient across the membrane. This chain is V-type ATP synthase subunit D, found in Chlamydia abortus (strain DSM 27085 / S26/3) (Chlamydophila abortus).